The chain runs to 460 residues: Rab-3A-interacting protein (460 aa).

S147, S149, S247, S250, S272, and S280 each carry phosphoserine. The stretch at S149–L244 forms a coiled coil. The interval S246–S280 is disordered. Residues K271–S280 show a composition bias toward polar residues.

It belongs to the SEC2 family. Homodimer. Interacts with the N-terminal region of SSX2. Interacts with the GDP-bound forms of RAB8A and RAB8B. The interaction with RAB8A is prevented by phosphorylation of RAB8A at 'Thr-72'. Interacts with the GDP-bound forms of RAB3A and RAB3D. Interacts with DCDC1. Interacts (via the N-terminal region) with TRAPPC14; this interaction mediates RAB3IP association with the TRAPP II complex. Forms a heterotetramer with RAB11A where RAB3IP homodimer binds two RAB11A subunits. Forms a complex with RAB11A and RAB11FIP3, probably a heterohexamer with two of each protein subunit, where Rabin8/RAB3IP and RAB11FIP3 simultaneously bind to RAB11A; the complex promotes preciliary trafficking. Forms a complex containing RAB11A, ASAP1, RAB3IP, RAP11FIP3 and ARF4; the complex promotes preciliary trafficking; the complex binds to RHO in photoreceptor cells and promotes RHO ciliary transport. In terms of tissue distribution, ubiquitously expressed. Expressed at highest level in testis.

It is found in the cytoplasm. It localises to the nucleus. The protein resides in the cytoskeleton. The protein localises to the cell projection. Its subcellular location is the lamellipodium. Guanine nucleotide exchange factor (GEF) which may activate RAB8A and RAB8B. Promotes the exchange of GDP to GTP, converting inactive GDP-bound Rab proteins into their active GTP-bound form. Mediates the release of GDP from RAB8A and RAB8B but not from RAB3A or RAB5. Modulates actin organization and promotes polarized transport of RAB8A-specific vesicles to the cell surface. Together with RAB11A, RAB8A, the exocyst complex, PARD3, PRKCI, ANXA2, CDC42 and DNMBP promotes transcytosis of PODXL to the apical membrane initiation sites (AMIS), apical surface formation and lumenogenesis. Together with RAB11A and FIP3/RAB11FIP3, parts of the ciliary targeting complex that promotes preciliary vesicle trafficking to mother centriole and ciliogenesis initiation. Part of the ciliary targeting complex containing Rab11, ASAP1, RAB3IP and RAB11FIP3 and ARF4 that promotes RAB3IP preciliary vesicle trafficking to mother centriole and ciliogenesis initiation. The polypeptide is Rab-3A-interacting protein (Rab3ip) (Rattus norvegicus (Rat)).